Here is a 279-residue protein sequence, read N- to C-terminus: NAD kinase (279 aa).

Residue aspartate 63 is the Proton acceptor of the active site. Residues 63–64 (DG), arginine 68, 133–134 (NE), and aspartate 163 contribute to the NAD(+) site.

This sequence belongs to the NAD kinase family. Requires a divalent metal cation as cofactor.

The protein localises to the cytoplasm. It catalyses the reaction NAD(+) + ATP = ADP + NADP(+) + H(+). Its function is as follows. Involved in the regulation of the intracellular balance of NAD and NADP, and is a key enzyme in the biosynthesis of NADP. Catalyzes specifically the phosphorylation on 2'-hydroxyl of the adenosine moiety of NAD to yield NADP. The sequence is that of NAD kinase from Protochlamydia amoebophila (strain UWE25).